Here is a 353-residue protein sequence, read N- to C-terminus: Mitochondrial distribution and morphology protein 12 (353 aa).

Residues 1 to 330 enclose the SMP-LTD domain; the sequence is MSFDIKWENL…WPSWICLDMN (330 aa). 3 stretches are compositionally biased toward acidic residues: residues 64–75, 84–103, and 330–342; these read DEFYEDTTDSPE, TGDDDDDDDDDEDDESDDDG, and NDDDEEEEEEENP. 2 disordered regions span residues 64–140 and 330–353; these read DEFY…NRSR and NDDDEEEEEEENPSESSSTTHVGS.

This sequence belongs to the MDM12 family. Component of the ER-mitochondria encounter structure (ERMES) or MDM complex, composed of MMM1, MDM10, MDM12 and MDM34. An MMM1 homodimer associates with one molecule of MDM12 on each side in a pairwise head-to-tail manner, and the SMP-LTD domains of MMM1 and MDM12 generate a continuous hydrophobic tunnel for phospholipid trafficking.

It localises to the mitochondrion outer membrane. Its subcellular location is the endoplasmic reticulum membrane. Its function is as follows. Component of the ERMES/MDM complex, which serves as a molecular tether to connect the endoplasmic reticulum (ER) and mitochondria. Components of this complex are involved in the control of mitochondrial shape and protein biogenesis, and function in nonvesicular lipid trafficking between the ER and mitochondria. MDM12 is required for the interaction of the ER-resident membrane protein MMM1 and the outer mitochondrial membrane-resident beta-barrel protein MDM10. The MDM12-MMM1 subcomplex functions in the major beta-barrel assembly pathway that is responsible for biogenesis of all mitochondrial outer membrane beta-barrel proteins, and acts in a late step after the SAM complex. The MDM10-MDM12-MMM1 subcomplex further acts in the TOM40-specific pathway after the action of the MDM12-MMM1 complex. Essential for establishing and maintaining the structure of mitochondria and maintenance of mtDNA nucleoids. The protein is Mitochondrial distribution and morphology protein 12 of Candida tropicalis (strain ATCC MYA-3404 / T1) (Yeast).